The sequence spans 161 residues: MKVILLDSIDKVGKIGSEIIVKSGYARNFLFPKSKAVLSTKKNLAIFKKQQHILKSNLDSKRLKAEFRAKAINDLGSITITVKSSIHGKLFGSIGSRDIAKLITESVGFEVHKSQIRLPNRDALKSIGEHNVCIHVYNEIYANLTVHILNSVLFQDKSKKS.

Belongs to the bacterial ribosomal protein bL9 family.

Functionally, binds to the 23S rRNA. The chain is Large ribosomal subunit protein bL9 from Blochmanniella floridana.